The chain runs to 1384 residues: CHD3-type chromatin-remodeling factor PICKLE (1384 aa).

S23 bears the Phosphoserine mark. Residues 49–96 form a PHD-type zinc finger; the sequence is ENACQACGESTNLVSCNTCTYAFHAKCLVPPLKDASVENWRCPECVSP. 2 consecutive Chromo domains span residues 98 to 180 and 190 to 249; these read NEID…NSED and TTVD…RSKD. In terms of domain architecture, Helicase ATP-binding spans 285-471; the sequence is RFSWSKQTHV…FMLMHFLDAG (187 aa). 298–305 contacts ATP; sequence DEMGLGKT. The short motif at 376 to 383 is the Nuclear localization signal element; the sequence is KKKKSGQI. The short motif at 422–425 is the DEAH box element; the sequence is DEGH. A Helicase C-terminal domain is found at 599-760; that stretch reads LLDKMMVKLK…NINQEELDDI (162 aa). A compositionally biased stretch (acidic residues) spans 893–912; it reads AGLEDVSSDGDESYEAESTD. Disordered stretches follow at residues 893 to 941, 1122 to 1152, 1313 to 1344, and 1365 to 1384; these read AGLE…TPLM, GLQG…NNNA, SDQS…PLRG, and VDVK…MVVD. Residues 1138-1152 are compositionally biased toward polar residues; that stretch reads TNQNPGSVITGNNNA. Basic and acidic residues-rich tracts occupy residues 1316 to 1341 and 1367 to 1384; these read SKSH…ETKP and VKME…MVVD.

This sequence belongs to the SNF2/RAD54 helicase family. As to quaternary structure, interacts with TAF12B. In terms of tissue distribution, mostly expressed in tissue undergoing significant differentiation (meristems and primordia) such as young seedlings, influorescent tissue and young siliques, but not in endosperm and seed coat (at protein level). Levels decrease as organs age. Also present in trichomes.

The protein localises to the nucleus. Its function is as follows. Chromatin remodeling factor that represses the expression of embryonic trait genes (such as NFYB9/LEC1) upon and after seed germination and thus enables the developmental switch to post-germinative growth. Silences some MADS-box proteins such as PHE1 and PHE2. Plays a role during carpel differentiation. Regulates late processes in cytokinin signaling. This Arabidopsis thaliana (Mouse-ear cress) protein is CHD3-type chromatin-remodeling factor PICKLE (PKL).